We begin with the raw amino-acid sequence, 265 residues long: tRNA pseudouridine synthase A (265 aa).

The active-site Nucleophile is Asp-52. Tyr-112 is a substrate binding site.

It belongs to the tRNA pseudouridine synthase TruA family. As to quaternary structure, homodimer.

The catalysed reaction is uridine(38/39/40) in tRNA = pseudouridine(38/39/40) in tRNA. In terms of biological role, formation of pseudouridine at positions 38, 39 and 40 in the anticodon stem and loop of transfer RNAs. The polypeptide is tRNA pseudouridine synthase A (Akkermansia muciniphila (strain ATCC BAA-835 / DSM 22959 / JCM 33894 / BCRC 81048 / CCUG 64013 / CIP 107961 / Muc)).